Reading from the N-terminus, the 394-residue chain is S-adenosylmethionine synthase (394 aa).

Glutamate 10 contacts Mg(2+). Residue histidine 16 coordinates ATP. Glutamate 44 contributes to the K(+) binding site. The L-methionine site is built by glutamate 57 and glutamine 100. ATP contacts are provided by residues 168–170 (DGK), 236–239 (SGRF), aspartate 247, 253–254 (RK), alanine 270, lysine 274, and lysine 278. Aspartate 247 is an L-methionine binding site. L-methionine is bound at residue lysine 278.

This sequence belongs to the AdoMet synthase family. As to quaternary structure, homotetramer. Mn(2+) is required as a cofactor. It depends on Mg(2+) as a cofactor. Requires Co(2+) as cofactor. K(+) serves as cofactor.

It is found in the cytoplasm. It carries out the reaction L-methionine + ATP + H2O = S-adenosyl-L-methionine + phosphate + diphosphate. It participates in amino-acid biosynthesis; S-adenosyl-L-methionine biosynthesis; S-adenosyl-L-methionine from L-methionine: step 1/1. Catalyzes the formation of S-adenosylmethionine from methionine and ATP. The reaction comprises two steps that are both catalyzed by the same enzyme: formation of S-adenosylmethionine (AdoMet) and triphosphate, and subsequent hydrolysis of the triphosphate. In Medicago truncatula (Barrel medic), this protein is S-adenosylmethionine synthase (METK).